We begin with the raw amino-acid sequence, 72 residues long: Translation initiation factor IF-1 (72 aa).

Residues 1–72 (MAKDDVIEVD…DKGRITYRHK (72 aa)) enclose the S1-like domain.

This sequence belongs to the IF-1 family. Component of the 30S ribosomal translation pre-initiation complex which assembles on the 30S ribosome in the order IF-2 and IF-3, IF-1 and N-formylmethionyl-tRNA(fMet); mRNA recruitment can occur at any time during PIC assembly.

The protein localises to the cytoplasm. Functionally, one of the essential components for the initiation of protein synthesis. Stabilizes the binding of IF-2 and IF-3 on the 30S subunit to which N-formylmethionyl-tRNA(fMet) subsequently binds. Helps modulate mRNA selection, yielding the 30S pre-initiation complex (PIC). Upon addition of the 50S ribosomal subunit IF-1, IF-2 and IF-3 are released leaving the mature 70S translation initiation complex. The protein is Translation initiation factor IF-1 of Helicobacter hepaticus (strain ATCC 51449 / 3B1).